We begin with the raw amino-acid sequence, 295 residues long: Nucleotide-binding protein RBAM_031990 (295 aa).

Residue 16-23 participates in ATP binding; that stretch reads GMSGAGKT. 67 to 70 is a GTP binding site; it reads DLRG.

Belongs to the RapZ-like family.

Functionally, displays ATPase and GTPase activities. In Bacillus velezensis (strain DSM 23117 / BGSC 10A6 / LMG 26770 / FZB42) (Bacillus amyloliquefaciens subsp. plantarum), this protein is Nucleotide-binding protein RBAM_031990.